A 352-amino-acid polypeptide reads, in one-letter code: Elongation factor Tu, mitochondrial (352 aa).

The tr-type G domain occupies 45-241; that stretch reads RPHVNVGTIG…AIDTHIPLPH (197 aa). The interval 54-61 is G1; that stretch reads GHVDHGKT. GTP-binding residues include aspartate 57, glycine 59, lysine 60, threonine 61, and threonine 62. Threonine 61 contacts Mg(2+). Residues 95–99 are G2; the sequence is GITIN. The G3 stretch occupies residues 116 to 119; the sequence is DCPG. Residues asparagine 171, aspartate 174, serine 209, alanine 210, and leucine 211 each contribute to the GTP site. A G4 region spans residues 171 to 174; it reads NKAD. Residues 209-211 form a G5 region; the sequence is SAL.

The protein localises to the mitochondrion. The enzyme catalyses GTP + H2O = GDP + phosphate + H(+). Its function is as follows. GTP hydrolase that promotes the GTP-dependent binding of aminoacyl-tRNA to the A-site of ribosomes during protein biosynthesis. In Gallus gallus (Chicken), this protein is Elongation factor Tu, mitochondrial.